Reading from the N-terminus, the 1863-residue chain is Breast cancer type 1 susceptibility protein homolog (1863 aa).

Met-1 carries the post-translational modification N-acetylmethionine. The segment at 24 to 65 adopts an RING-type zinc-finger fold; sequence CPICLELIKEPVSTKCDHIFCKFCMLKLLNQKKGPSQCPLCK. A Glycyl lysine isopeptide (Lys-Gly) (interchain with G-Cter in SUMO2) cross-link involves residue Lys-109. Ser-114 carries the phosphoserine modification. Residues 230–267 form a disordered region; the sequence is ETDVTNTEHHQPSNNDLNTTEKRATERHPEKYQGSSVS. Positions 248 to 260 are enriched in basic and acidic residues; it reads TTEKRATERHPEK. Residue Lys-301 forms a Glycyl lysine isopeptide (Lys-Gly) (interchain with G-Cter in SUMO2) linkage. Residues 306 to 338 form a disordered region; sequence NKSKQPGLARSQHNRWAGSKETCNDRRTPSTEK. Basic and acidic residues predominate over residues 327–338; sequence TCNDRRTPSTEK. Lys-339 is covalently cross-linked (Glycyl lysine isopeptide (Lys-Gly) (interchain with G-Cter in SUMO2)). Phosphoserine occurs at positions 395, 398, 423, and 434. Residues Lys-443, Lys-459, and Lys-519 each participate in a glycyl lysine isopeptide (Lys-Gly) (interchain with G-Cter in SUMO2) cross-link. Position 551 is a phosphoserine (Ser-551). Residues Lys-583 and Lys-654 each participate in a glycyl lysine isopeptide (Lys-Gly) (interchain with G-Cter in SUMO2) cross-link. Residues 650–739 form a disordered region; that stretch reads IKKKKYNQMP…EKEEKLETVK (90 aa). Ser-694, Ser-708, and Ser-725 each carry phosphoserine. Over residues 705 to 716 the composition is skewed to polar residues; sequence APGSFTNCSNTS. Basic and acidic residues predominate over residues 727–737; that stretch reads PREEKEEKLET. Residues Lys-734 and Lys-739 each participate in a glycyl lysine isopeptide (Lys-Gly) (interchain with G-Cter in SUMO2) cross-link. Phosphoserine occurs at positions 753 and 840. A disordered region spans residues 896–915; the sequence is SPKVTFEREQKEQNQGKNES. Residues 900–909 are compositionally biased toward basic and acidic residues; the sequence is TFEREQKEQN. Residues Lys-918 and Lys-987 each participate in a glycyl lysine isopeptide (Lys-Gly) (interchain with G-Cter in SUMO2) cross-link. Residue Ser-988 is modified to Phosphoserine; by CHEK2. Position 1009 is a phosphoserine (Ser-1009). Lys-1079 is covalently cross-linked (Glycyl lysine isopeptide (Lys-Gly) (interchain with G-Cter in SUMO2)). A phosphoserine mark is found at Ser-1143, Ser-1189, Ser-1191, Ser-1211, Ser-1217, Ser-1218, Ser-1280, Ser-1328, Ser-1336, Ser-1342, and Ser-1387. Positions 1181-1216 are disordered; that stretch reads VQRGELSRSPSPFTHTHLAQGYRRGAKKLESSEENL. The interval 1322 to 1395 is disordered; sequence KQMRHQSESQ…SSQSDILTTQ (74 aa). Over residues 1373 to 1395 the composition is skewed to polar residues; the sequence is ESETSVSEDCSGLSSQSDILTTQ. The residue at position 1394 (Thr-1394) is a Phosphothreonine. Residues 1397–1424 are interaction with PALB2; that stretch reads RDTMQDNLIKLQQEMAELEAVLEQHGSQ. Phosphoserine is present on residues Ser-1423, Ser-1457, Ser-1524, and Ser-1542. The segment at 1440 to 1505 is disordered; it reads EDLQNPEQST…SSPSKCPSLD (66 aa). Polar residues predominate over residues 1444-1470; it reads NPEQSTSEKAVLTSQKSSEYPISQNPE. The tract at residues 1565-1642 is disordered; the sequence is ESGISLFSDD…SREKPELTAS (78 aa). The span at 1610–1624 shows a compositional bias: polar residues; the sequence is SAQSPAAAHTTNTAG. BRCT domains are found at residues 1642 to 1736 and 1756 to 1855; these read STER…DFEV and QDRK…TYLI.

As to quaternary structure, heterodimer with BARD1. Part of the BRCA1-associated genome surveillance complex (BASC), which contains BRCA1, MSH2, MSH6, MLH1, ATM, BLM, PMS2 and the MRE11-RAD50-NBN protein (MRN) complex. This association could be a dynamic process changing throughout the cell cycle and within subnuclear domains. Component of the BRCA1-A complex, at least composed of BRCA1, BARD1, UIMC1/RAP80, ABRAXAS1, BRCC3/BRCC36, BABAM2 and BABAM1/NBA1. Interacts (via the BRCT domains) with ABRAXAS1 (phosphorylated form); this is important for recruitment to sites of DNA damage. Can form a heterotetramer with two molecules of ABRAXAS1 (phosphorylated form). Component of the BRCA1-RBBP8 complex. Interacts (via the BRCT domains) with RBBP8 ('Ser-327' phosphorylated form); the interaction ubiquitinates RBBP8, regulates CHEK1 activation, and involves RBBP8 in BRCA1-dependent G2/M checkpoint control on DNA damage. Associates with RNA polymerase II holoenzyme. Interacts with SMC1A, NELFB, DCLRE1C, CLSPN. CHEK1, CHEK2, BAP1, BRCC3, UBXN1 and PCLAF. Interacts (via BRCT domains) with BRIP1 (phosphorylated form). Interacts with FANCD2 (ubiquitinated form). Interacts with H2AX (phosphorylated on 'Ser-140'). Interacts (via the BRCT domains) with ACACA (phosphorylated form); the interaction prevents dephosphorylation of ACACA. Part of a BRCA complex containing BRCA1, BRCA2 and PALB2. Interacts directly with PALB2; the interaction is essential for its function in HRR. Interacts directly with BRCA2; the interaction occurs only in the presence of PALB2 which serves as the bridging protein. Interacts (via the BRCT domains) with LMO4; the interaction represses the transcriptional activity of BRCA1. Interacts (via the BRCT domains) with CCAR2 (via N-terminus); the interaction represses the transcriptional activator activity of BRCA1. Interacts with EXD2. Interacts (via C-terminus) with DHX9; this interaction is direct and links BRCA1 to the RNA polymerase II holoenzyme. Interacts with DNA helicase ZGRF1; the interaction is increased following DNA damage induction. Phosphorylated in response to IR, UV, and various stimuli that cause checkpoint activation, probably by ATM or ATR. Phosphorylation at Ser-988 by CHEK2 regulates mitotic spindle assembly. Phosphorylation by AURKA regulates centrosomal microtubule nucleation. In terms of processing, autoubiquitinated, undergoes 'Lys-6'-linked polyubiquitination. 'Lys-6'-linked polyubiquitination does not promote degradation.

It localises to the nucleus. Its subcellular location is the chromosome. The protein resides in the cytoplasm. The enzyme catalyses S-ubiquitinyl-[E2 ubiquitin-conjugating enzyme]-L-cysteine + [acceptor protein]-L-lysine = [E2 ubiquitin-conjugating enzyme]-L-cysteine + N(6)-ubiquitinyl-[acceptor protein]-L-lysine.. E3 ubiquitin-protein ligase that specifically mediates the formation of 'Lys-6'-linked polyubiquitin chains and plays a central role in DNA repair by facilitating cellular responses to DNA damage. It is unclear whether it also mediates the formation of other types of polyubiquitin chains. The BRCA1-BARD1 heterodimer coordinates a diverse range of cellular pathways such as DNA damage repair, ubiquitination and transcriptional regulation to maintain genomic stability. Regulates centrosomal microtubule nucleation. Required for appropriate cell cycle arrests after ionizing irradiation in both the S-phase and the G2 phase of the cell cycle. Required for FANCD2 targeting to sites of DNA damage. Inhibits lipid synthesis by binding to inactive phosphorylated ACACA and preventing its dephosphorylation. Contributes to homologous recombination repair (HRR) via its direct interaction with PALB2, fine-tunes recombinational repair partly through its modulatory role in the PALB2-dependent loading of BRCA2-RAD51 repair machinery at DNA breaks. Component of the BRCA1-RBBP8 complex which regulates CHEK1 activation and controls cell cycle G2/M checkpoints on DNA damage via BRCA1-mediated ubiquitination of RBBP8. Acts as a transcriptional activator. In Pan troglodytes (Chimpanzee), this protein is Breast cancer type 1 susceptibility protein homolog (BRCA1).